Here is a 125-residue protein sequence, read N- to C-terminus: Large ribosomal subunit protein bL12 (125 aa).

This sequence belongs to the bacterial ribosomal protein bL12 family. Homodimer. Part of the ribosomal stalk of the 50S ribosomal subunit. Forms a multimeric L10(L12)X complex, where L10 forms an elongated spine to which 2 to 4 L12 dimers bind in a sequential fashion. Binds GTP-bound translation factors.

Functionally, forms part of the ribosomal stalk which helps the ribosome interact with GTP-bound translation factors. Is thus essential for accurate translation. The sequence is that of Large ribosomal subunit protein bL12 from Endomicrobium trichonymphae.